A 271-amino-acid polypeptide reads, in one-letter code: Zinc finger protein 501 (271 aa).

9 consecutive C2H2-type zinc fingers follow at residues Ser-22–His-44, Tyr-50–His-72, Tyr-78–His-100, Tyr-106–His-128, Tyr-134–His-156, Phe-162–His-184, Tyr-190–His-212, Tyr-218–His-240, and Tyr-246–His-268.

It belongs to the krueppel C2H2-type zinc-finger protein family.

The protein localises to the nucleus. It localises to the nucleolus. May be involved in transcriptional regulation. Essential for Golgi structural integrity. The sequence is that of Zinc finger protein 501 (ZNF501) from Pongo abelii (Sumatran orangutan).